Reading from the N-terminus, the 619-residue chain is 1-deoxy-D-xylulose-5-phosphate synthase (619 aa).

Residues His74 and Gly115–Ser117 each bind thiamine diphosphate. Residue Asp146 participates in Mg(2+) binding. Thiamine diphosphate contacts are provided by residues Gly147–Ala148, Asn175, Tyr285, and Glu365. Asn175 contacts Mg(2+).

The protein belongs to the transketolase family. DXPS subfamily. Homodimer. The cofactor is Mg(2+). Requires thiamine diphosphate as cofactor.

The catalysed reaction is D-glyceraldehyde 3-phosphate + pyruvate + H(+) = 1-deoxy-D-xylulose 5-phosphate + CO2. It participates in metabolic intermediate biosynthesis; 1-deoxy-D-xylulose 5-phosphate biosynthesis; 1-deoxy-D-xylulose 5-phosphate from D-glyceraldehyde 3-phosphate and pyruvate: step 1/1. Its function is as follows. Catalyzes the acyloin condensation reaction between C atoms 2 and 3 of pyruvate and glyceraldehyde 3-phosphate to yield 1-deoxy-D-xylulose-5-phosphate (DXP). This Clostridium acetobutylicum (strain ATCC 824 / DSM 792 / JCM 1419 / IAM 19013 / LMG 5710 / NBRC 13948 / NRRL B-527 / VKM B-1787 / 2291 / W) protein is 1-deoxy-D-xylulose-5-phosphate synthase.